A 300-amino-acid chain; its full sequence is Tyrosine recombinase XerD (300 aa).

The 86-residue stretch at 5–90 (YQCDPLIDAF…SLRRFYNYLL (86 aa)) folds into the Core-binding (CB) domain. The 184-residue stretch at 111 to 294 (HLPDSLSESQ…ARARLQELHQ (184 aa)) folds into the Tyr recombinase domain. Active-site residues include R151, K175, H246, R249, and H272. The O-(3'-phospho-DNA)-tyrosine intermediate role is filled by Y281.

The protein belongs to the 'phage' integrase family. XerD subfamily. As to quaternary structure, forms a cyclic heterotetrameric complex composed of two molecules of XerC and two molecules of XerD.

It is found in the cytoplasm. In terms of biological role, site-specific tyrosine recombinase, which acts by catalyzing the cutting and rejoining of the recombining DNA molecules. The XerC-XerD complex is essential to convert dimers of the bacterial chromosome into monomers to permit their segregation at cell division. It also contributes to the segregational stability of plasmids. The polypeptide is Tyrosine recombinase XerD (Shewanella oneidensis (strain ATCC 700550 / JCM 31522 / CIP 106686 / LMG 19005 / NCIMB 14063 / MR-1)).